The following is a 552-amino-acid chain: Hydroxylamine reductase (552 aa).

Residues cysteine 3, cysteine 6, cysteine 18, and cysteine 25 each contribute to the [2Fe-2S] cluster site. Hybrid [4Fe-2O-2S] cluster is bound by residues histidine 250, glutamate 274, cysteine 318, cysteine 406, cysteine 434, cysteine 459, glutamate 493, and lysine 495. Position 406 is a cysteine persulfide (cysteine 406).

The protein belongs to the HCP family. Requires [2Fe-2S] cluster as cofactor. Hybrid [4Fe-2O-2S] cluster is required as a cofactor.

Its subcellular location is the cytoplasm. The enzyme catalyses A + NH4(+) + H2O = hydroxylamine + AH2 + H(+). Its function is as follows. Catalyzes the reduction of hydroxylamine to form NH(3) and H(2)O. The chain is Hydroxylamine reductase from Shewanella woodyi (strain ATCC 51908 / MS32).